The chain runs to 117 residues: uncharacterized protein (117 aa).

The helical transmembrane segment at 10–32 (VCYLGDIAASGFLNSIATALIAV) threads the bilayer.

The protein resides in the membrane. This is an uncharacterized protein from Rickettsia conorii (strain ATCC VR-613 / Malish 7).